The primary structure comprises 434 residues: Glutamyl-tRNA reductase (434 aa).

Substrate contacts are provided by residues 49 to 52, Ser109, 114 to 116, and Gln120; these read TCNR and EPQ. Residue Cys50 is the Nucleophile of the active site. Residue 189–194 coordinates NADP(+); the sequence is GAGEMC.

Belongs to the glutamyl-tRNA reductase family. As to quaternary structure, homodimer.

The catalysed reaction is (S)-4-amino-5-oxopentanoate + tRNA(Glu) + NADP(+) = L-glutamyl-tRNA(Glu) + NADPH + H(+). Its pathway is porphyrin-containing compound metabolism; protoporphyrin-IX biosynthesis; 5-aminolevulinate from L-glutamyl-tRNA(Glu): step 1/2. Functionally, catalyzes the NADPH-dependent reduction of glutamyl-tRNA(Glu) to glutamate 1-semialdehyde (GSA). This is Glutamyl-tRNA reductase from Geobacter sulfurreducens (strain ATCC 51573 / DSM 12127 / PCA).